A 275-amino-acid polypeptide reads, in one-letter code: S-formylglutathione hydrolase (275 aa).

Catalysis depends on charge relay system residues serine 145, aspartate 221, and histidine 254.

It belongs to the esterase D family.

The enzyme catalyses S-formylglutathione + H2O = formate + glutathione + H(+). Functionally, serine hydrolase involved in the detoxification of formaldehyde. Hydrolyzes S-formylglutathione to glutathione and formate. The chain is S-formylglutathione hydrolase from Haemophilus influenzae (strain ATCC 51907 / DSM 11121 / KW20 / Rd).